We begin with the raw amino-acid sequence, 502 residues long: Protein Dok-7 (502 aa).

The region spanning 4-109 is the PH domain; that stretch reads SVVVEGYARL…WDARLRYSLG (106 aa). Residues 105 to 210 form the IRS-type PTB domain; sequence RYSLGEVHRF…RGISPTRGPF (106 aa). Disordered regions lie at residues 210 to 232, 249 to 279, 291 to 358, and 418 to 482; these read FGLR…RLNH, STAS…SDCS, TSIQ…GSFS, and EVGG…GHPG. 2 stretches are compositionally biased toward low complexity: residues 264-279 and 301-316; these read ISGS…SDCS and AGAK…PLPS. Residues 336-346 show a composition bias toward polar residues; the sequence is GRQSSSDSGIA. The span at 347 to 358 shows a compositional bias: low complexity; that stretch reads TGSHSSYSGSFS. Over residues 459 to 473 the composition is skewed to basic and acidic residues; it reads PNEHFRSPSESKKSS.

Its subcellular location is the cell membrane. The protein localises to the synapse. Probable muscle-intrinsic activator of MUSK that plays an essential role in neuromuscular synaptogenesis. Acts in aneural activation of MUSK and subsequent acetylcholine receptor (AchR) clustering in myotubes. The chain is Protein Dok-7 (dok7) from Takifugu rubripes (Japanese pufferfish).